The primary structure comprises 533 residues: Laccase-2 (533 aa).

The first 23 residues, 1 to 23, serve as a signal peptide directing secretion; sequence MFPGARILATLTLALHLLHGAHA. Plastocyanin-like domains lie at 25–171, 173–336, and 382–501; these read IGPA…LSLY, IDNA…LETN, and TAPV…FAED. 4 residues coordinate Cu cation: H98, H100, H143, and H145. 2 disulfide bridges follow: C119/C516 and C151/C238. The Cu cation site is built by H427, H430, and H432. The N-linked (GlcNAc...) (high mannose) asparagine glycan is linked to N467. 4 residues coordinate Cu cation: H483, C484, H485, and H489.

Belongs to the multicopper oxidase family. Cu cation is required as a cofactor. N-glycosylated at Asn-467; contains a high-mannose glycan with a varying number of mannose residues.

The protein localises to the secreted. It carries out the reaction 4 hydroquinone + O2 = 4 benzosemiquinone + 2 H2O. Its function is as follows. Lignin degradation and detoxification of lignin-derived products. The chain is Laccase-2 (POX2) from Pleurotus ostreatus (Oyster mushroom).